Consider the following 824-residue polypeptide: Glycophorin-binding protein 130 (824 aa).

A PEXEL motif motif is present at residues 84–88; the sequence is RILAE. Disordered regions lie at residues 97–236, 258–291, 310–334, 358–384, 408–431, 457–482, 507–532, 559–582, 659–683, 711–733, and 759–783; these read EKTT…GQIM, NTDPNDEVERRNADNKEDLTSADPEGQIMREYAS, DPNDDVERRNADNKEDLTSADPEGQ, NTDPNDEVERRNADNKEDLTSADPEGQ, NTDPNDEVERRNADNKELTSSDPE, NTDPNDEVERRNADNKEDLTSADPEG, DPNDEVERRNADNKEDLTSADPEG, DPNDEVERRNADNKEDLTSADPEGQ, and NDEVERRNADNKEDLTSADPEGQ. Composition is skewed to basic and acidic residues over residues 117-140 and 174-198; these read TKKDEENKSVVTEEQKVESDSEKQ and KKEESGKPEENKHANEASKKQEPKA. The span at 200-228 shows a compositional bias: polar residues; the sequence is KVSQKPSTSTRSNNEVKIRAASNQETLTS. 12 GBP repeats span residues 226–275, 276–325, 326–375, 376–424, 425–474, 475–524, 525–574, 575–624, 625–674, 675–724, 725–774, and 775–824; these read LTSA…NKED, LTSA…DNKE, LTSS…NKED, LTSA…NKEE, and LTSA…NNEA. Composition is skewed to basic and acidic residues over residues 264-276, 314-326, 364-376, 414-426, 463-475, 513-525, 563-575, 663-675, 713-725, and 763-775; these read EVERRNADNKEDL, DVERRNADNKEDL, and EVERRNADNKELT.

As to quaternary structure, interacts with host glycophorin.

It localises to the secreted. It is found in the cell surface. Its subcellular location is the host cytoplasm. Involved in merozoite invasion of host erythrocytes. In Plasmodium falciparum (isolate 3D7), this protein is Glycophorin-binding protein 130.